Reading from the N-terminus, the 193-residue chain is MLNKKIIKPAGKVATEFENTVAQALVDLENNNAELKDLKDLSVCSVKEVDVAESKKAVVIFVPFRQLKNYNKIQQKLTYEVEKKLGGKQVMFIAQRRIIRKPASNNKIKMQKRPISRTIKAVHDAILDDLVFPNTIVGRRLRYRLDGSKLHKIYLDRKEMLSNISKVDSFSAVYHKLTGKEVVFEFTQQTAEN.

The protein belongs to the eukaryotic ribosomal protein eS7 family.

The sequence is that of Small ribosomal subunit protein eS7 (rps7) from Dictyostelium discoideum (Social amoeba).